The primary structure comprises 120 residues: Large ribosomal subunit protein bL20 (120 aa).

Belongs to the bacterial ribosomal protein bL20 family.

In terms of biological role, binds directly to 23S ribosomal RNA and is necessary for the in vitro assembly process of the 50S ribosomal subunit. It is not involved in the protein synthesizing functions of that subunit. The protein is Large ribosomal subunit protein bL20 of Baumannia cicadellinicola subsp. Homalodisca coagulata.